We begin with the raw amino-acid sequence, 122 residues long: Large ribosomal subunit protein uL14c (122 aa).

The protein belongs to the universal ribosomal protein uL14 family. Part of the 50S ribosomal subunit.

It localises to the plastid. The protein resides in the chloroplast. In terms of biological role, binds to 23S rRNA. The sequence is that of Large ribosomal subunit protein uL14c from Chaetosphaeridium globosum (Charophycean green alga).